A 449-amino-acid chain; its full sequence is Trigger factor (449 aa).

A PPIase FKBP-type domain is found at 162 to 242 (GDFVTIDMTV…VRAVREKQVP (81 aa)). The segment at 428–449 (APVNLEGGSTPAAEAEPAVSEA) is disordered. Residues 438–449 (PAAEAEPAVSEA) show a composition bias toward low complexity.

Belongs to the FKBP-type PPIase family. Tig subfamily.

The protein localises to the cytoplasm. The catalysed reaction is [protein]-peptidylproline (omega=180) = [protein]-peptidylproline (omega=0). Its function is as follows. Involved in protein export. Acts as a chaperone by maintaining the newly synthesized protein in an open conformation. Functions as a peptidyl-prolyl cis-trans isomerase. In Acidothermus cellulolyticus (strain ATCC 43068 / DSM 8971 / 11B), this protein is Trigger factor.